The chain runs to 498 residues: Ribose import ATP-binding protein RbsA (498 aa).

ABC transporter domains follow at residues 2 to 237 (LALQ…VGRD) and 247 to 491 (VTPG…TGQQ). 34–41 (GENGAGKS) contributes to the ATP binding site.

The protein belongs to the ABC transporter superfamily. Ribose importer (TC 3.A.1.2.1) family. As to quaternary structure, the complex is composed of an ATP-binding protein (RbsA), two transmembrane proteins (RbsC) and a solute-binding protein (RbsB).

It localises to the cell membrane. The catalysed reaction is D-ribose(out) + ATP + H2O = D-ribose(in) + ADP + phosphate + H(+). Part of the ABC transporter complex RbsABC involved in ribose import. Responsible for energy coupling to the transport system. The protein is Ribose import ATP-binding protein RbsA of Deinococcus geothermalis (strain DSM 11300 / CIP 105573 / AG-3a).